A 359-amino-acid polypeptide reads, in one-letter code: 3-dehydroquinate synthase (359 aa).

NAD(+) contacts are provided by residues 71 to 76 (DGEQFK), 105 to 109 (GVIGD), 129 to 130 (TT), lysine 142, lysine 151, and 169 to 172 (CLHT). Zn(2+) is bound by residues glutamate 184, histidine 247, and histidine 264.

The protein belongs to the sugar phosphate cyclases superfamily. Dehydroquinate synthase family. Co(2+) serves as cofactor. The cofactor is Zn(2+). It depends on NAD(+) as a cofactor.

The protein resides in the cytoplasm. The enzyme catalyses 7-phospho-2-dehydro-3-deoxy-D-arabino-heptonate = 3-dehydroquinate + phosphate. It participates in metabolic intermediate biosynthesis; chorismate biosynthesis; chorismate from D-erythrose 4-phosphate and phosphoenolpyruvate: step 2/7. In terms of biological role, catalyzes the conversion of 3-deoxy-D-arabino-heptulosonate 7-phosphate (DAHP) to dehydroquinate (DHQ). In Shewanella sp. (strain W3-18-1), this protein is 3-dehydroquinate synthase.